Reading from the N-terminus, the 205-residue chain is Pyridoxal 5'-phosphate synthase subunit PdxT (205 aa).

53–55 (GES) is a binding site for L-glutamine. The Nucleophile role is filled by C85. L-glutamine-binding positions include R112 and 140-141 (IR). Residues H176 and E178 each act as charge relay system in the active site.

Belongs to the glutaminase PdxT/SNO family. As to quaternary structure, in the presence of PdxS, forms a dodecamer of heterodimers. Only shows activity in the heterodimer.

It catalyses the reaction aldehydo-D-ribose 5-phosphate + D-glyceraldehyde 3-phosphate + L-glutamine = pyridoxal 5'-phosphate + L-glutamate + phosphate + 3 H2O + H(+). The catalysed reaction is L-glutamine + H2O = L-glutamate + NH4(+). The protein operates within cofactor biosynthesis; pyridoxal 5'-phosphate biosynthesis. Functionally, catalyzes the hydrolysis of glutamine to glutamate and ammonia as part of the biosynthesis of pyridoxal 5'-phosphate. The resulting ammonia molecule is channeled to the active site of PdxS. This Haloquadratum walsbyi (strain DSM 16790 / HBSQ001) protein is Pyridoxal 5'-phosphate synthase subunit PdxT.